Consider the following 125-residue polypeptide: Probable prefoldin subunit 6 (125 aa).

The protein belongs to the prefoldin subunit beta family. Heterohexamer of two PFD-alpha type and four PFD-beta type subunits.

In terms of biological role, binds specifically to cytosolic chaperonin (c-CPN) and transfers target proteins to it. Binds to nascent polypeptide chain and promotes folding in an environment in which there are many competing pathways for nonnative proteins. This Drosophila melanogaster (Fruit fly) protein is Probable prefoldin subunit 6.